The sequence spans 333 residues: Adenosine deaminase (333 aa).

Residues histidine 12 and histidine 14 each coordinate Zn(2+). Positions 14, 16, and 170 each coordinate substrate. A Zn(2+)-binding site is contributed by histidine 197. Glutamate 200 acts as the Proton donor in catalysis. Aspartate 278 contacts Zn(2+). Aspartate 279 contacts substrate.

The protein belongs to the metallo-dependent hydrolases superfamily. Adenosine and AMP deaminases family. Adenosine deaminase subfamily. It depends on Zn(2+) as a cofactor.

It carries out the reaction adenosine + H2O + H(+) = inosine + NH4(+). It catalyses the reaction 2'-deoxyadenosine + H2O + H(+) = 2'-deoxyinosine + NH4(+). Its function is as follows. Catalyzes the hydrolytic deamination of adenosine and 2-deoxyadenosine. This is Adenosine deaminase from Salmonella dublin (strain CT_02021853).